The chain runs to 707 residues: MFFTQPPHLVKAEELKQEPPKGTAYSVAIPGTEQPGRSRVYRAWNAQKELLTTLDPQVTTAHDMFESTANRQPKNHCLGWRPYNSTTKTWDPYQWLTYETVQKRRAAFGAGLVELHQKHNCHRPGQYGVGLWAQNRPEWQITDLACISQSLYSVSIYDVLAPDATEYIINHAELNCVVTSLPHIPTLLKLKSSLPNLKMIVSLDPLDGPEQNGHSKRALLESMAAGLDLAIYTIDQVEELGLASKRGYNAPSASDIVTINYTSGTTGPPKGVVLTHGNAVAATSCGLTTIGQARGDTMCSYLPLAHIYARLAEHTAFWGGARIGYFHGNIVELVDDLKLLKPTGFMSVPRLYSRFGTAIRAATVEQPGFKGALSRHIVAAKMANMKNPDPSKATIKHALYDRIWAKKVAAALGLERAKYMISGSAPLDPTLHNFLRVATGTDVVQGYGLTESYASATAQSTQDLSSGNCGRLAPCTEACLVSLPDMEYSVEDKPFPRGELLLRGNNMFREYYKNDDETSKAVTEDGWFRTGDVCTVDAQGRFIIIDRRKNVLKLAQGEYISPERLEGVILSELGYVAQAYVHGDSSETFLVGIFGVAPDLFAPYASKVLGKTIAPTDVEGLKEHLNDDKLRRAVLRDLERVAKKHKFAGYERVRNVSLKVDPFTVENNLLTPTLKLKRPPVVKMYRTLLDQLYGQANEEQSAPRAKL.

Position 259 to 270 (259 to 270) interacts with ATP; the sequence is INYTSGTTGPPK. The segment at 525-549 is fatty acid-binding; sequence DGWFRTGDVCTVDAQGRFIIIDRRK. The short motif at 705–707 is the Peroxisome targeting signal element; it reads AKL.

It belongs to the ATP-dependent AMP-binding enzyme family.

The protein localises to the peroxisome matrix. It catalyses the reaction (4E,8E)-10-(4-hydroxy-6-methoxy-7-methyl-3-oxo-1,3-dihydro-2-benzofuran-5-yl)-4,8-dimethyldeca-4,8-dienoate + ATP + CoA = (4E,8E)-10-(4-hydroxy-6-methoxy-7-methyl-3-oxo-1,3-dihydro-2-benzofuran-5-yl)-4,8-dimethyldeca-4,8-dienoyl-CoA + AMP + diphosphate. It participates in secondary metabolite biosynthesis; terpenoid biosynthesis. Functionally, acyl-CoA ligase involved in the biosynthesis of mycophenolic acid (MPA), the first isolated antibiotic natural product in the world obtained from a culture of Penicillium brevicompactum in 1893. The peroxisomal acyl-CoA ligase 891 converts the intermediate MFDHMP-3C into MFDHMP-3C-CoA which impairs its diffusion from the peroxisome. The first step of the pathway is the synthesis of 5-methylorsellinic acid (5MOA) by the cytosolic polyketide synthase mpaC. 5MOA is then converted to the phthalide compound 5,7-dihydroxy-4,6-dimethylphthalide (DHMP) by the endoplasmic reticulum-bound cytochrome P450 monooxygenase mpaDE. MpaDE first catalyzes hydroxylation of 5-MOA to 4,6-dihydroxy-2-(hydroxymethyl)-3-methylbenzoic acid (DHMB). MpaDE then acts as a lactone synthase that catalyzes the ring closure to convert DHMB into DHMP. The next step is the prenylation of DHMP by the Golgi apparatus-associated prenyltransferase mpaA to yield farnesyl-DHMP (FDHMP). The ER-bound oxygenase mpaB then mediates the oxidative cleavage the C19-C20 double bond in FDHMP to yield FDHMP-3C via a mycophenolic aldehyde intermediate. The O-methyltransferase mpaG catalyzes the methylation of FDHMP-3C to yield MFDHMP-3C. After the cytosolic methylation of FDHMP-3C, MFDHMP-3C enters into peroxisomes probably via free diffusion due to its low molecular weight. Upon a peroxisomal CoA ligation reaction, catalyzed by a beta-oxidation component enzyme acyl-CoA ligase ACL891, MFDHMP-3C-CoA would then be restricted to peroxisomes for the following beta-oxidation pathway steps. The peroxisomal beta-oxidation machinery than converts MFDHMP-3C-CoA into MPA_CoA, via a beta-oxidation chain-shortening process. Finally mpaH acts as a peroxisomal acyl-CoA hydrolase with high substrate specificity toward MPA-CoA to release the final product MPA. This is Acyl-CoA ligase 891, peroxisomal from Penicillium brevicompactum.